The primary structure comprises 402 residues: Argininosuccinate synthase (402 aa).

9–17 (AYSGGLDTS) lines the ATP pocket. An L-citrulline-binding site is contributed by tyrosine 87. ATP is bound at residue glycine 117. Threonine 119, asparagine 123, and aspartate 124 together coordinate L-aspartate. Asparagine 123 is a binding site for L-citrulline. Residues arginine 127, serine 176, serine 185, glutamate 261, and tyrosine 273 each coordinate L-citrulline.

Belongs to the argininosuccinate synthase family. Type 1 subfamily. In terms of assembly, homotetramer.

The protein localises to the cytoplasm. It carries out the reaction L-citrulline + L-aspartate + ATP = 2-(N(omega)-L-arginino)succinate + AMP + diphosphate + H(+). It functions in the pathway amino-acid biosynthesis; L-arginine biosynthesis; L-arginine from L-ornithine and carbamoyl phosphate: step 2/3. The chain is Argininosuccinate synthase from Chlorobium phaeobacteroides (strain BS1).